A 698-amino-acid chain; its full sequence is Polyribonucleotide nucleotidyltransferase (698 aa).

2 residues coordinate Mg(2+): aspartate 487 and aspartate 493. One can recognise a KH domain in the interval proline 555–isoleucine 614. In terms of domain architecture, S1 motif spans glycine 624–lysine 692.

Belongs to the polyribonucleotide nucleotidyltransferase family. It depends on Mg(2+) as a cofactor.

The protein localises to the cytoplasm. The enzyme catalyses RNA(n+1) + phosphate = RNA(n) + a ribonucleoside 5'-diphosphate. In terms of biological role, involved in mRNA degradation. Catalyzes the phosphorolysis of single-stranded polyribonucleotides processively in the 3'- to 5'-direction. This is Polyribonucleotide nucleotidyltransferase from Lachnoclostridium phytofermentans (strain ATCC 700394 / DSM 18823 / ISDg) (Clostridium phytofermentans).